Reading from the N-terminus, the 212-residue chain is ER lumen protein-retaining receptor 1-A (212 aa).

Residues 1 to 4 (MNIF) lie on the Lumenal side of the membrane. Residues 5–24 (RFLGDISHLSAIFILLLKIW) traverse the membrane as a helical segment. Residues 25–32 (KSRSCAGI) lie on the Cytoplasmic side of the membrane. Residues 33–52 (SGKSQLLFAIVFTARYLDLF) form a helical membrane-spanning segment. An interaction with the K-D-E-L motif on target proteins region spans residues 47-48 (RY). Over 53 to 58 (TNYISF) the chain is Lumenal. The helical transmembrane segment at 59 to 79 (YNTSMKVVYVASSYATVWMIY) threads the bilayer. Over 80-92 (SKFKATYDGNHDT) the chain is Cytoplasmic. Residues 93–110 (FRVEFLIVPTAILAFLVN) form a helical membrane-spanning segment. Residues 111-116 (HDFTPL) are Lumenal-facing. Residues 117-135 (EIFWTFSIYLESVAILPQL) traverse the membrane as a helical segment. The Cytoplasmic segment spans residues 136 to 149 (FMVSKTGEAETITS). A helical transmembrane segment spans residues 150–168 (HYLFALGIYRTLYLFNWIW). The tract at residues 159–169 (RTLYLFNWIWR) is interaction with the K-D-E-L motif on target proteins. The Lumenal segment spans residues 169-178 (RYQFEGFFDL). The chain crosses the membrane as a helical span at residues 179–199 (IAIVAGLVQTVLYCDFFYLYV). Topologically, residues 200–212 (TKVLKGKKLSLPA) are cytoplasmic. Positions 204-207 (KGKK) are important for recycling of cargo proteins with the sequence motif K-D-E-L from the Golgi to the endoplasmic reticulum.

This sequence belongs to the ERD2 family.

It localises to the golgi apparatus membrane. Its subcellular location is the cytoplasmic vesicle. It is found in the COPI-coated vesicle membrane. The protein resides in the endoplasmic reticulum membrane. The protein localises to the endoplasmic reticulum-Golgi intermediate compartment membrane. Its function is as follows. Receptor for the C-terminal sequence motif K-D-E-L that is present on endoplasmic reticulum resident proteins and that mediates their recycling from the Golgi back to the endoplasmic reticulum. This Xenopus laevis (African clawed frog) protein is ER lumen protein-retaining receptor 1-A (kdelr1-a).